The following is a 135-amino-acid chain: Putative pre-16S rRNA nuclease (135 aa).

The protein belongs to the YqgF nuclease family.

It localises to the cytoplasm. Could be a nuclease involved in processing of the 5'-end of pre-16S rRNA. This chain is Putative pre-16S rRNA nuclease, found in Maridesulfovibrio salexigens (strain ATCC 14822 / DSM 2638 / NCIMB 8403 / VKM B-1763) (Desulfovibrio salexigens).